Reading from the N-terminus, the 309-residue chain is uncharacterized protein (309 aa).

Disordered regions lie at residues 1-94 (IGEV…RQQI) and 286-309 (HTRNSKFHPPAKNTPPPLEDPPRG). Residues 30–43 (PAQPPSPAPTPSRT) are compositionally biased toward pro residues. Over residues 58–67 (RSKTPDKRSA) the composition is skewed to basic and acidic residues. Positions 297–309 (KNTPPPLEDPPRG) are enriched in pro residues.

This is an uncharacterized protein from Homo sapiens (Human).